Here is a 521-residue protein sequence, read N- to C-terminus: MTIHVKNNIHWVGQRDWEVRDFHGTEYKTHKGTSYNSYLIREGKNVLIDTVDHKFSREFVQNLAAEIDLASIDVIVINHAEEDHAGALTELMARIPGTPIYCTHNAIDSITGHHHHPEWNFHPVKTGDSLDIGNGKQLVFIETPMLHWPDSMMTYMTEDAVLFSNDAFGQHYCDEHLFNDEVDQTELMEQCQRYYANILTPFSPLVTAKIKEVLGFNLPVSMVATSHGIVWRDDPTQIILKYLEWADHYQEDRITLFYDSMSNNTRMMADAIAQGIHEVDPGVAVKIYNVARHDKNEILTQVFRSKGVLVGSSTMNNVMMPKVAGMLEEITGLRFRNKRASAFGSYGWTGGAVDRIQTRLMDAGFDISISLKAKWRPDGSALALCREHGRQLARQWALHPLEAPCPIITTSAAAAPVVEAGVVVEMSVPASAGVVEVGVPAFSGAMELPVSRGVAPTTCEQDDDQPMLCTVCQWIYDPALGEPDQLVAPGTPWARVPDSFLCPGCGIGKEVFEPCAVEACV.

Residues 30–210 are zinc metallo-hydrolase; the sequence is HKGTSYNSYL…PFSPLVTAKI (181 aa). 6 residues coordinate Fe cation: His79, Glu81, Asp83, His147, Asp166, and His227. The region spanning 254–393 is the Flavodoxin-like domain; that stretch reads ITLFYDSMSN…LCREHGRQLA (140 aa). Residues 260-264 and 342-369 each bind FMN; these read SMSNN and AFGSYGWTGGAVDRIQTRLMDAGFDISI. Positions 464–515 constitute a Rubredoxin-like domain; it reads DQPMLCTVCQWIYDPALGEPDQLVAPGTPWARVPDSFLCPGCGIGKEVFEPC. Fe cation is bound by residues Cys469, Cys472, Cys502, and Cys505.

In the N-terminal section; belongs to the zinc metallo-hydrolase group 3 family. Homotetramer. Fe cation is required as a cofactor. It depends on FMN as a cofactor.

The protein localises to the cytoplasm. It functions in the pathway nitrogen metabolism; nitric oxide reduction. In terms of biological role, anaerobic nitric oxide reductase; uses NADH to detoxify nitric oxide (NO), protecting several 4Fe-4S NO-sensitive enzymes. Has at least 2 reductase partners, only one of which (NorW, flavorubredoxin reductase) has been identified. NO probably binds to the di-iron center; electrons enter from the NorW at rubredoxin and are transferred sequentially to the FMN center and the di-iron center. Also able to function as an aerobic oxygen reductase. This Aeromonas salmonicida (strain A449) protein is Anaerobic nitric oxide reductase flavorubredoxin.